The chain runs to 359 residues: DNA integrity scanning protein DisA (359 aa).

A DAC domain is found at 10–148; it reads ELDLLDIVQF…GNRRYTLKDI (139 aa). Residues Gly77, Leu95, and 108 to 112 contribute to the ATP site; that span reads MRHRT.

The protein belongs to the DisA family. In terms of assembly, homooctamer. Mg(2+) is required as a cofactor.

The catalysed reaction is 2 ATP = 3',3'-c-di-AMP + 2 diphosphate. In terms of biological role, participates in a DNA-damage check-point that is active prior to asymmetric division when DNA is damaged. DisA forms globular foci that rapidly scan along the chromosomes during sporulation, searching for lesions. When a lesion is present, DisA pauses at the lesion site. This triggers a cellular response that culminates in a temporary block in sporulation initiation. Also has diadenylate cyclase activity, catalyzing the condensation of 2 ATP molecules into cyclic di-AMP (c-di-AMP). c-di-AMP acts as a signaling molecule that couples DNA integrity with progression of sporulation. The rise in c-di-AMP level generated by DisA while scanning the chromosome, operates as a positive signal that advances sporulation; upon encountering a lesion, the DisA focus arrests at the damaged site and halts c-di-AMP synthesis. This chain is DNA integrity scanning protein DisA, found in Bacillus pumilus (strain SAFR-032).